The sequence spans 340 residues: DNA-directed RNA polymerase subunit alpha (340 aa).

The tract at residues 1-236 (MLSLSKNWNT…EQLQLFISFE (236 aa)) is alpha N-terminal domain (alpha-NTD). The interval 246–340 (TDALPFSPYL…LSNRYEDSYN (95 aa)) is alpha C-terminal domain (alpha-CTD).

Belongs to the RNA polymerase alpha chain family. In terms of assembly, homodimer. The RNAP catalytic core consists of 2 alpha, 1 beta, 1 beta' and 1 omega subunit. When a sigma factor is associated with the core the holoenzyme is formed, which can initiate transcription.

The enzyme catalyses RNA(n) + a ribonucleoside 5'-triphosphate = RNA(n+1) + diphosphate. DNA-dependent RNA polymerase catalyzes the transcription of DNA into RNA using the four ribonucleoside triphosphates as substrates. The sequence is that of DNA-directed RNA polymerase subunit alpha from Rickettsia felis (strain ATCC VR-1525 / URRWXCal2) (Rickettsia azadi).